The sequence spans 272 residues: Centromere protein V-like protein 3 (272 aa).

A compositionally biased stretch (basic residues) spans Met-1–Arg-17. 2 disordered regions span residues Met-1 to Ala-23 and Arg-65 to Asp-95. The span at Pro-77–Ala-88 shows a compositional bias: pro residues. The region spanning His-133–Glu-246 is the CENP-V/GFA domain. Residues Cys-137, Cys-139, Cys-157, Cys-159, Cys-162, Cys-201, and Cys-204 each contribute to the Zn(2+) site. The tract at residues Gly-240–Gln-272 is disordered.

Belongs to the Gfa family. Zn(2+) serves as cofactor.

This is Centromere protein V-like protein 3 from Homo sapiens (Human).